The following is a 129-amino-acid chain: METVTSLVFIVNLLIIFTSVVNQARGDTCIDGLGYCNNCDERCKAKHGPSSESSCDRSVGVPLCKCYYECESPPSPPAPPKKCDGGAGICSQRCQGQCCDMNCAQKYIGGHGFCNTLGTFSFCQCEYPC.

The signal sequence occupies residues 1–26 (METVTSLVFIVNLLIIFTSVVNQARG). Cystine bridges form between Cys29–Cys70, Cys36–Cys55, Cys39–Cys64, Cys43–Cys66, Cys83–Cys129, Cys94–Cys114, Cys99–Cys123, and Cys103–Cys125.

This sequence belongs to the DEFL family.

Its subcellular location is the secreted. In terms of biological role, confers broad-spectrum resistance to pathogens. The polypeptide is Defensin-like protein 182 (PDF3.2) (Arabidopsis thaliana (Mouse-ear cress)).